The primary structure comprises 27 residues: Metalloproteinase inhibitor 1 (27 aa).

The segment covering 1–12 (IEPERQEEEEEE) has biased composition (acidic residues). The segment at 1–27 (IEPERQEEEEEETRQRVRRGQVRQQQQ) is disordered.

Its function is as follows. Metalloproteinase inhibitor, active on a globulinase from L.albus seeds, thermolysin and gelatinase B. The protein is Metalloproteinase inhibitor 1 of Lupinus albus (White lupine).